A 479-amino-acid chain; its full sequence is Octopamine receptor (479 aa).

At 1–57 (MGQAATHDANNYTSINYTEIYDVIEDEKDVCAVADEPNIPCSFGISLAVPEWEAICT) the chain is on the extracellular side. N-linked (GlcNAc...) asparagine glycosylation is found at N11 and N16. The helical transmembrane segment at 58–80 (AIILTMIIISTVVGNILVILSVF) threads the bilayer. The Cytoplasmic portion of the chain corresponds to 81 to 90 (TYKPLRIVQN). The chain crosses the membrane as a helical span at residues 91-112 (FFIVSLAVADLTVAILVLPLNV). The Extracellular portion of the chain corresponds to 113–129 (AYSILGQWVFGIYVCKM). A helical membrane pass occupies residues 130–150 (WLTCDIMCCTSSILNLCAIAL). Residues 151 to 170 (DRYWAITDPINYAQKRTLER) lie on the Cytoplasmic side of the membrane. A helical transmembrane segment spans residues 171-193 (VLFMIGIVWILSLVISSPPLLGW). Residues 194–218 (NDWPEVFEPDTPCRLTSQPGFVIFS) are Extracellular-facing. Residues 219–240 (SSGSFYIPLVIMTVVYFEIYLA) form a helical membrane-spanning segment. At 241–407 (TKKRLRDRAK…LTRERRAART (167 aa)) the chain is on the cytoplasmic side. The segment at 260 to 319 (GRNKYETKESDPNDQDSVSSDANPNEHQGGTRLVAENEKKHRTRKLTPKKKPKRRYWSKD) is disordered. A compositionally biased stretch (polar residues) spans 274–287 (QDSVSSDANPNEHQ). Over residues 299 to 315 (KHRTRKLTPKKKPKRRY) the composition is skewed to basic residues. The helical transmembrane segment at 408 to 429 (LGIIMGVFVVCWLPFFVIYLVI) threads the bilayer. Topologically, residues 430-441 (PFCVSCCLSNKF) are extracellular. Residues 442–462 (INFITWLGYVNSALNPLIYTI) traverse the membrane as a helical segment. Residues 463 to 479 (FNMDFRRAFKKLLFIKC) lie on the Cytoplasmic side of the membrane.

It belongs to the G-protein coupled receptor 1 family.

The protein resides in the cell membrane. Receptor for octopamine. Octopamine (OA) is a neurotransmitter, neurohormone, and neuromodulator in invertebrates. The activity of this receptor is mediated by G proteins which activate adenylyl cyclase. This chain is Octopamine receptor, found in Bombyx mori (Silk moth).